Here is a 284-residue protein sequence, read N- to C-terminus: Serine/threonine-protein phosphatase Pgam5, mitochondrial (284 aa).

Residues 8 to 24 (LGVPTATLAVGTLLLGD) form a helical membrane-spanning segment.

It belongs to the phosphoglycerate mutase family. BPG-dependent PGAM subfamily. Interacts with skn-1 isoforms a and c.

The protein resides in the mitochondrion outer membrane. The enzyme catalyses O-phospho-L-seryl-[protein] + H2O = L-seryl-[protein] + phosphate. It catalyses the reaction O-phospho-L-threonyl-[protein] + H2O = L-threonyl-[protein] + phosphate. Functionally, displays phosphatase activity for serine/threonine residues. Has apparently no phosphoglycerate mutase activity. In Caenorhabditis elegans, this protein is Serine/threonine-protein phosphatase Pgam5, mitochondrial (pgam-5).